A 387-amino-acid chain; its full sequence is Succinate--CoA ligase [ADP-forming] subunit beta (387 aa).

An ATP-grasp domain is found at 9 to 236 (KELFAKHNVP…RAATDPLELK (228 aa)). ATP contacts are provided by residues lysine 45, 52 to 54 (GRG), serine 94, and glutamate 99. 2 residues coordinate Mg(2+): asparagine 191 and aspartate 205. Residues asparagine 256 and 318–320 (GIT) each bind substrate.

It belongs to the succinate/malate CoA ligase beta subunit family. Heterotetramer of two alpha and two beta subunits. Mg(2+) serves as cofactor.

The enzyme catalyses succinate + ATP + CoA = succinyl-CoA + ADP + phosphate. It carries out the reaction GTP + succinate + CoA = succinyl-CoA + GDP + phosphate. The protein operates within carbohydrate metabolism; tricarboxylic acid cycle; succinate from succinyl-CoA (ligase route): step 1/1. Its function is as follows. Succinyl-CoA synthetase functions in the citric acid cycle (TCA), coupling the hydrolysis of succinyl-CoA to the synthesis of either ATP or GTP and thus represents the only step of substrate-level phosphorylation in the TCA. The beta subunit provides nucleotide specificity of the enzyme and binds the substrate succinate, while the binding sites for coenzyme A and phosphate are found in the alpha subunit. This chain is Succinate--CoA ligase [ADP-forming] subunit beta, found in Mycobacterium marinum (strain ATCC BAA-535 / M).